The chain runs to 362 residues: Methylthioribose-1-phosphate isomerase (362 aa).

Substrate contacts are provided by residues 53 to 55 (RGA), Arg-90, and Gln-201. Asp-242 acts as the Proton donor in catalysis. 252-253 (NK) serves as a coordination point for substrate.

This sequence belongs to the eIF-2B alpha/beta/delta subunits family. MtnA subfamily.

The enzyme catalyses 5-(methylsulfanyl)-alpha-D-ribose 1-phosphate = 5-(methylsulfanyl)-D-ribulose 1-phosphate. The protein operates within amino-acid biosynthesis; L-methionine biosynthesis via salvage pathway; L-methionine from S-methyl-5-thio-alpha-D-ribose 1-phosphate: step 1/6. In terms of biological role, catalyzes the interconversion of methylthioribose-1-phosphate (MTR-1-P) into methylthioribulose-1-phosphate (MTRu-1-P). This Paramagnetospirillum magneticum (strain ATCC 700264 / AMB-1) (Magnetospirillum magneticum) protein is Methylthioribose-1-phosphate isomerase.